The primary structure comprises 594 residues: MHAFRSHTCAELNKSHVGETVRLSGWVHRVRDHGGLLFIDLRDHYGVTQVMADPDSPVFAEIEKVRSEWCIRIDGEVKARDESLVNAKIPTGEIEVFIRDIEVLGKSEELPLMVFGEQEYPEETRLRYRYLDLRREKMQRNMVLRSNMIRSIRNRMWDQGFNEYQTPIITASSPEGARDFLVPSRLHPGKFYALPQAPQQFKQLMMVSGFDKYFQIAPCFRDEDPRADRSPTDFYQLDMEMSFVTQQDVFDTIAPVIAGVFEEFGQGRKVDAPNEWPQISYKDAALWYGSDKPDLRNPIKMQVVSEHFRGSGFAIFAKLLEQEGTEIRAIPAPTGGSRKFCDRMNAFAQKEGLPGMGYIFWREGADGMEAAGPLAKNIGPERTEAIRQQLGLGVGDAAFFLGGKPKTFEAVAGRARNVIGEELNLTDKDRFAFAWIVDFPIYEKDEETGKIDFEHNPFSMPQGGMDALNGDPLDVRGNQYDLACNGYELVSGAIRNHKPEIMFKAFEIAGYGKEEVEKRFGGMVNAFQYGAPPHGGCAAGIDRMVMLLADEANIREVIMFPMNQRAEDLMMAAPSEPMSEQLMELGLRVIPQDD.

Glutamate 175 is an L-aspartate binding site. The interval 199–202 is aspartate; sequence QQFK. L-aspartate contacts are provided by arginine 221 and histidine 455. 221–223 is an ATP binding site; the sequence is RDE. Glutamate 488 lines the ATP pocket. Residue arginine 495 coordinates L-aspartate. 540-543 provides a ligand contact to ATP; that stretch reads GIDR.

This sequence belongs to the class-II aminoacyl-tRNA synthetase family. Type 1 subfamily. In terms of assembly, homodimer.

Its subcellular location is the cytoplasm. It carries out the reaction tRNA(Asx) + L-aspartate + ATP = L-aspartyl-tRNA(Asx) + AMP + diphosphate. Its function is as follows. Aspartyl-tRNA synthetase with relaxed tRNA specificity since it is able to aspartylate not only its cognate tRNA(Asp) but also tRNA(Asn). Reaction proceeds in two steps: L-aspartate is first activated by ATP to form Asp-AMP and then transferred to the acceptor end of tRNA(Asp/Asn). The polypeptide is Aspartate--tRNA(Asp/Asn) ligase (Ruegeria sp. (strain TM1040) (Silicibacter sp.)).